The primary structure comprises 58 residues: Large ribosomal subunit protein eL37 (58 aa).

Over residues methionine 1–histidine 17 the composition is skewed to polar residues. The interval methionine 1 to lysine 26 is disordered. 4 residues coordinate Zn(2+): cysteine 20, cysteine 23, cysteine 35, and cysteine 38. A C4-type zinc finger spans residues cysteine 20–cysteine 38.

Belongs to the eukaryotic ribosomal protein eL37 family. The cofactor is Zn(2+).

In terms of biological role, binds to the 23S rRNA. The sequence is that of Large ribosomal subunit protein eL37 from Halobacterium salinarum (strain ATCC 29341 / DSM 671 / R1).